The sequence spans 198 residues: Recombination protein RecR (198 aa).

The segment at 57-72 (CSICGNLTDDDPCHIC) adopts a C4-type zinc-finger fold. The 96-residue stretch at 80-175 (ETILVVEASK…KVTRLARGLA (96 aa)) folds into the Toprim domain.

This sequence belongs to the RecR family.

Functionally, may play a role in DNA repair. It seems to be involved in an RecBC-independent recombinational process of DNA repair. It may act with RecF and RecO. The chain is Recombination protein RecR from Streptococcus equi subsp. zooepidemicus (strain MGCS10565).